The sequence spans 313 residues: Solute carrier family 35 member E3 (313 aa).

Transmembrane regions (helical) follow at residues 14–34 (IIAG…INKW), 40–60 (GFPN…GLFI), 77–97 (ILLL…SLQS), 100–122 (IGTY…TMYY), 130–146 (IKLT…LNSY), 153–173 (LMGM…QVWV), 187–207 (LLYY…PFFE), 215–235 (IFGP…VIAF), 252–272 (TYNM…YVLF), and 275–295 (PLSL…LAYT).

Belongs to the TPT transporter family. SLC35E subfamily.

It localises to the membrane. Putative transporter. The chain is Solute carrier family 35 member E3 (slc35e3) from Danio rerio (Zebrafish).